We begin with the raw amino-acid sequence, 397 residues long: Cytochrome b (397 aa).

Helical transmembrane passes span 38-58 (FGSL…FLAM), 82-104 (WLLR…LHIF), 119-139 (VWCL…IGYV), and 185-205 (FFSL…LHLA). His88 and His102 together coordinate heme b. 2 residues coordinate heme b: His189 and His203. His208 lines the a ubiquinone pocket. A run of 4 helical transmembrane segments spans residues 231 to 251 (FYVK…IWIF), 295 to 315 (AGGV…PFFK), 327 to 347 (IYQG…WIGC), and 354 to 373 (FVTI…AITP).

It belongs to the cytochrome b family. In terms of assembly, the main subunits of complex b-c1 are: cytochrome b, cytochrome c1 and the Rieske protein. It depends on heme b as a cofactor.

It localises to the mitochondrion inner membrane. In terms of biological role, component of the ubiquinol-cytochrome c reductase complex (complex III or cytochrome b-c1 complex) that is part of the mitochondrial respiratory chain. The b-c1 complex mediates electron transfer from ubiquinol to cytochrome c. Contributes to the generation of a proton gradient across the mitochondrial membrane that is then used for ATP synthesis. The protein is Cytochrome b (MT-CYB) of Oryza sativa subsp. indica (Rice).